The primary structure comprises 434 residues: Angio-associated migratory cell protein (434 aa).

The interval 1–63 is disordered; that stretch reads MESESESGAA…EEEEEEGNEE (63 aa). Position 20 is a phosphoserine (Ser-20). Acidic residues predominate over residues 39-62; it reads DPDDLAQEMEDVDFEEEEEEEGNE. 8 WD repeats span residues 89 to 129, 132 to 171, 173 to 212, 214 to 254, 258 to 299, 315 to 354, 356 to 395, and 398 to 433; these read LHSA…LLFE, GHKD…EVWS, EAGD…KTFQ, PNCP…HVLK, GHQG…GVFR, SESN…LRHQ, QHQS…LLTD, and GHTA…QRPD.

As to expression, expressed in metastatic melanoma, liver, skin, kidney, heart, lung, lymph node, skeletal muscle and brain, and also in A2058 melanoma cells and activated T-cells (at protein level). Expressed in blood vessels. Strongly expressed in endothelial cells, cytotrophoblasts, and poorly differentiated. colon adenocarcinoma cells found in lymphatics.

It localises to the cell membrane. The protein resides in the cytoplasm. Plays a role in angiogenesis and cell migration. In smooth muscle cell migration, may act through the RhoA pathway. The sequence is that of Angio-associated migratory cell protein (AAMP) from Homo sapiens (Human).